Reading from the N-terminus, the 369-residue chain is CCA-adding enzyme (369 aa).

Residues Gly8 and Arg11 each coordinate ATP. CTP is bound by residues Gly8 and Arg11. Residues Asp21 and Asp23 each contribute to the Mg(2+) site. ATP is bound by residues Arg91, Arg137, and Arg140. Arg91, Arg137, and Arg140 together coordinate CTP.

Belongs to the tRNA nucleotidyltransferase/poly(A) polymerase family. Bacterial CCA-adding enzyme type 2 subfamily. Requires Mg(2+) as cofactor.

The catalysed reaction is a tRNA precursor + 2 CTP + ATP = a tRNA with a 3' CCA end + 3 diphosphate. It carries out the reaction a tRNA with a 3' CCA end + 2 CTP + ATP = a tRNA with a 3' CCACCA end + 3 diphosphate. In terms of biological role, catalyzes the addition and repair of the essential 3'-terminal CCA sequence in tRNAs without using a nucleic acid template. Adds these three nucleotides in the order of C, C, and A to the tRNA nucleotide-73, using CTP and ATP as substrates and producing inorganic pyrophosphate. tRNA 3'-terminal CCA addition is required both for tRNA processing and repair. Also involved in tRNA surveillance by mediating tandem CCA addition to generate a CCACCA at the 3' terminus of unstable tRNAs. While stable tRNAs receive only 3'-terminal CCA, unstable tRNAs are marked with CCACCA and rapidly degraded. In Francisella tularensis subsp. novicida (strain U112), this protein is CCA-adding enzyme.